The sequence spans 126 residues: Small ribosomal subunit protein bS6 (126 aa).

A disordered region spans residues 101-126; that stretch reads VMMKAKEERTAKREDAAPRAEEAAAE. The segment covering 104 to 126 has biased composition (basic and acidic residues); it reads KAKEERTAKREDAAPRAEEAAAE.

The protein belongs to the bacterial ribosomal protein bS6 family.

In terms of biological role, binds together with bS18 to 16S ribosomal RNA. This is Small ribosomal subunit protein bS6 from Aliivibrio salmonicida (strain LFI1238) (Vibrio salmonicida (strain LFI1238)).